The sequence spans 36 residues: Photosystem I reaction center subunit VIII (36 aa).

Residues 6 to 26 traverse the membrane as a helical segment; sequence LPSIFVPLVGLVFPAIAMASL.

This sequence belongs to the PsaI family.

The protein localises to the plastid. It is found in the chloroplast thylakoid membrane. Functionally, may help in the organization of the PsaL subunit. This chain is Photosystem I reaction center subunit VIII, found in Liriodendron tulipifera (Tuliptree).